The chain runs to 133 residues: Profilin (133 aa).

This sequence belongs to the profilin family.

In terms of biological role, more likely to influence phosphoinositide metabolism than actin assembly. The chain is Profilin from Cowpox virus (strain GRI-90 / Grishak) (CPV).